A 308-amino-acid polypeptide reads, in one-letter code: MAVAMDNAILENILRQVRPLIGQGKVADYIPALATVDGSRLGIAICTVDGQLFQAGDAQERFSIQSISKVLSLVVAMRHYSEEEIWQRVGKDPSGSPFNSLVQLEMEQGIPRNPFINTGALVVCDMLQGRLSAPRQRMLEVVRGLSGVSDISYDTVVARSEFEHSARNAAIAWLMKSFGNFHHDVTTVLQNYFHYCALKMSCVELARTFVFLANQGKAIHIDEPVVTPMQARQINALMATSGMYQNAGEFAWRVGLPAKSGVGGGIVAIVPHEMAIAVWSPELDDAGNSLAGIAVLEQLTKQLGRSVY.

Residues serine 66, asparagine 117, glutamate 161, asparagine 168, tyrosine 192, tyrosine 244, and valine 262 each coordinate substrate.

The protein belongs to the glutaminase family. Homotetramer.

It carries out the reaction L-glutamine + H2O = L-glutamate + NH4(+). This Shigella flexneri protein is Glutaminase 2.